The primary structure comprises 164 residues: RNA pyrophosphohydrolase (164 aa).

The Nudix hydrolase domain maps to 8–153 (PYRSNVGAAL…KRPIYERLAR (146 aa)). The Nudix box motif lies at 45–66 (GGIDGDEDPAAAVLRELDEEIG).

Belongs to the Nudix hydrolase family. RppH subfamily. A divalent metal cation is required as a cofactor.

In terms of biological role, accelerates the degradation of transcripts by removing pyrophosphate from the 5'-end of triphosphorylated RNA, leading to a more labile monophosphorylated state that can stimulate subsequent ribonuclease cleavage. The sequence is that of RNA pyrophosphohydrolase from Acidiphilium cryptum (strain JF-5).